Consider the following 610-residue polypeptide: UvrABC system protein C (610 aa).

Residues 16–94 (SQPGVYRMYD…IKLYQPRYNV (79 aa)) enclose the GIY-YIG domain. Positions 204-239 (QQVLTQLITRMEEASQQLHFEDAARIRDQIQAVRRV) constitute a UVR domain.

The protein belongs to the UvrC family. As to quaternary structure, interacts with UvrB in an incision complex.

The protein resides in the cytoplasm. The UvrABC repair system catalyzes the recognition and processing of DNA lesions. UvrC both incises the 5' and 3' sides of the lesion. The N-terminal half is responsible for the 3' incision and the C-terminal half is responsible for the 5' incision. This chain is UvrABC system protein C, found in Yersinia pseudotuberculosis serotype O:1b (strain IP 31758).